The sequence spans 60 residues: Cytotoxin 5 (60 aa).

4 disulfide bridges follow: cysteine 3/cysteine 21, cysteine 14/cysteine 38, cysteine 42/cysteine 53, and cysteine 54/cysteine 59.

Belongs to the three-finger toxin family. Short-chain subfamily. Type IA cytotoxin sub-subfamily. Monomer in solution; Homodimer and oligomer in the presence of negatively charged lipids forming a pore with a size ranging between 20 and 30 Angstroms. Expressed by the venom gland.

The protein resides in the secreted. It is found in the target cell membrane. In terms of biological role, shows cytolytic activity on many different cells by forming pore in lipid membranes. In vivo, increases heart rate or kills the animal by cardiac arrest. In addition, it binds to heparin with high affinity, interacts with Kv channel-interacting protein 1 (KCNIP1) in a calcium-independent manner, and binds to integrin alpha-V/beta-3 (ITGAV/ITGB3) with moderate affinity. This is Cytotoxin 5 from Naja haje haje (Egyptian cobra).